Here is a 266-residue protein sequence, read N- to C-terminus: Tropinone reductase homolog At1g07440 (266 aa).

An NADP(+)-binding site is contributed by 18–42 (LVTGGTKGIGHAIVEEFAGFGAVIH). Serine 151 provides a ligand contact to substrate. The active-site Proton acceptor is tyrosine 164.

It belongs to the short-chain dehydrogenases/reductases (SDR) family. SDR65C subfamily.

This is Tropinone reductase homolog At1g07440 from Arabidopsis thaliana (Mouse-ear cress).